A 91-amino-acid chain; its full sequence is DNA-directed RNA polymerase subunit omega (91 aa).

It belongs to the RNA polymerase subunit omega family. In terms of assembly, the RNAP catalytic core consists of 2 alpha, 1 beta, 1 beta' and 1 omega subunit. When a sigma factor is associated with the core the holoenzyme is formed, which can initiate transcription.

The enzyme catalyses RNA(n) + a ribonucleoside 5'-triphosphate = RNA(n+1) + diphosphate. In terms of biological role, promotes RNA polymerase assembly. Latches the N- and C-terminal regions of the beta' subunit thereby facilitating its interaction with the beta and alpha subunits. The polypeptide is DNA-directed RNA polymerase subunit omega (Pectobacterium atrosepticum (strain SCRI 1043 / ATCC BAA-672) (Erwinia carotovora subsp. atroseptica)).